Consider the following 159-residue polypeptide: Ribosomal RNA large subunit methyltransferase H (159 aa).

Residues Leu-76, Gly-108, and 127 to 132 (FSKMTF) contribute to the S-adenosyl-L-methionine site.

It belongs to the RNA methyltransferase RlmH family. Homodimer.

It is found in the cytoplasm. It catalyses the reaction pseudouridine(1915) in 23S rRNA + S-adenosyl-L-methionine = N(3)-methylpseudouridine(1915) in 23S rRNA + S-adenosyl-L-homocysteine + H(+). In terms of biological role, specifically methylates the pseudouridine at position 1915 (m3Psi1915) in 23S rRNA. The protein is Ribosomal RNA large subunit methyltransferase H of Clostridium botulinum (strain Langeland / NCTC 10281 / Type F).